We begin with the raw amino-acid sequence, 56 residues long: Large ribosomal subunit protein bL32 (56 aa).

A disordered region spans residues 1–38 (MAVQQNKKSRSRRDMRRSHDALTTAAVSVDKTSGETHL). Residues 7 to 16 (KKSRSRRDMR) show a composition bias toward basic residues.

This sequence belongs to the bacterial ribosomal protein bL32 family.

The chain is Large ribosomal subunit protein bL32 from Histophilus somni (strain 129Pt) (Haemophilus somnus).